The chain runs to 179 residues: Large ribosomal subunit protein uL6 (179 aa).

The protein belongs to the universal ribosomal protein uL6 family. As to quaternary structure, part of the 50S ribosomal subunit.

Its function is as follows. This protein binds to the 23S rRNA, and is important in its secondary structure. It is located near the subunit interface in the base of the L7/L12 stalk, and near the tRNA binding site of the peptidyltransferase center. The chain is Large ribosomal subunit protein uL6 from Acidothermus cellulolyticus (strain ATCC 43068 / DSM 8971 / 11B).